A 1012-amino-acid chain; its full sequence is ATP-dependent DNA helicase MPH1 (1012 aa).

The region spanning 94–261 (IVQKSLYQNT…EVVNNLNISN (168 aa)) is the Helicase ATP-binding domain. 107 to 114 (IPTGMGKT) serves as a coordination point for ATP. A DEAH box motif is present at residues 209–212 (DEAH). One can recognise a Helicase C-terminal domain in the interval 430 to 654 (KLQKIINELS…NFVEYKKSDR (225 aa)). Residues 493 to 555 (DEGFIRKNKP…AQISGMNQKQ (63 aa)) are disordered. A compositionally biased stretch (basic residues) spans 498–510 (RKNKPKGRKKADR). Positions 511–537 (LKRLEEDKQKQLSKAKQKEQEKVERSS) are enriched in basic and acidic residues.

This sequence belongs to the DEAD box helicase family. DEAH subfamily. FANCM sub-subfamily. Interacts with the MHF histone-fold complex to form the FANCM-MHF complex.

It is found in the nucleus. The enzyme catalyses ATP + H2O = ADP + phosphate + H(+). Its function is as follows. ATP-dependent DNA helicase involved in DNA damage repair by homologous recombination and in genome maintenance. Capable of unwinding D-loops. Plays a role in limiting crossover recombinants during mitotic DNA double-strand break (DSB) repair. Component of a FANCM-MHF complex which promotes gene conversion at blocked replication forks, probably by reversal of the stalled fork. This chain is ATP-dependent DNA helicase MPH1, found in Vanderwaltozyma polyspora (strain ATCC 22028 / DSM 70294 / BCRC 21397 / CBS 2163 / NBRC 10782 / NRRL Y-8283 / UCD 57-17) (Kluyveromyces polysporus).